A 571-amino-acid chain; its full sequence is Leucine aminopeptidase A2, chloroplastic (571 aa).

Residues 1 to 42 (MATLRVSSLFASSSSSLHSNPSVFTKYQSSPKWAFSFPVTPL) constitute a chloroplast transit peptide. Mg(2+)-binding residues include Lys342 and Asp347. Lys354 is an active-site residue. Residues Asp367, Asp427, and Glu429 each contribute to the Mg(2+) site. Arg431 is an active-site residue.

Belongs to the peptidase M17 family. Homohexamer (dimer of homotrimers). Requires Mg(2+) as cofactor. In terms of tissue distribution, expressed during floral development. Expressed in healthy and senescent leaves, cotyledons (emergence from seed coats), pistils, sepals, petals, stamens, and floral buds (at protein level).

It localises to the plastid. The protein resides in the chloroplast. It catalyses the reaction Release of an N-terminal amino acid, Xaa-|-Yaa-, in which Xaa is preferably Leu, but may be other amino acids including Pro although not Arg or Lys, and Yaa may be Pro. Amino acid amides and methyl esters are also readily hydrolyzed, but rates on arylamides are exceedingly low.. It carries out the reaction Release of N-terminal proline from a peptide.. Catalyzes the removal of unsubstituted N-terminal amino acids from various peptides. When associated as homohexamer, catalyzes the proteolyzes of Xaa-Leu dipeptides. Possesses leucine aminopeptidase activity against the model substrate leucine-amido methyl coumarin. Presumably involved in the processing and regular turnover of intracellular proteins. Regulates wound signaling and has a role in insect defense. In terms of biological role, functions as a molecular chaperone to protect proteins from heat-induced damage. The sequence is that of Leucine aminopeptidase A2, chloroplastic from Solanum lycopersicum (Tomato).